Reading from the N-terminus, the 500-residue chain is NAD(P)H-quinone oxidoreductase chain 4, chloroplastic (500 aa).

13 helical membrane passes run Phe4 to Leu24, Tyr35 to Phe55, Ile87 to Val107, Leu134 to Met154, Phe167 to Leu187, Ile211 to His231, His242 to Val262, Ala272 to Ala292, Ile305 to Asp325, Gly330 to Gly350, Leu386 to Thr406, Ile416 to Met436, and Leu462 to Val482.

It belongs to the complex I subunit 4 family.

The protein localises to the plastid. It localises to the chloroplast thylakoid membrane. The enzyme catalyses a plastoquinone + NADH + (n+1) H(+)(in) = a plastoquinol + NAD(+) + n H(+)(out). It catalyses the reaction a plastoquinone + NADPH + (n+1) H(+)(in) = a plastoquinol + NADP(+) + n H(+)(out). This is NAD(P)H-quinone oxidoreductase chain 4, chloroplastic from Crucihimalaya wallichii (Rock-cress).